Consider the following 376-residue polypeptide: Carbohydrate sulfotransferase 14 (376 aa).

Residues 1 to 30 (MFPRPLTPLAAPKSAETLGRTPRRAPLGRA) form a disordered region. Topologically, residues 1 to 39 (MFPRPLTPLAAPKSAETLGRTPRRAPLGRARAGLGGPPL) are cytoplasmic. A compositionally biased stretch (low complexity) spans 18–30 (LGRTPRRAPLGRA). A helical; Signal-anchor for type II membrane protein transmembrane segment spans residues 40 to 60 (LLPSMLMFAVIVASSGLLLMI). At 61 to 376 (ERGILSEMKP…PNVTKEACHQ (316 aa)) the chain is on the lumenal side. Residues 76 to 96 (PSHKGAAWSGTDPKPRGLSLD) are disordered. The N-linked (GlcNAc...) asparagine glycan is linked to Asn-110. 3'-phosphoadenylyl sulfate contacts are provided by residues 155 to 161 (PKVACSN) and 213 to 221 (RDPLERLLS). Asn-368 carries an N-linked (GlcNAc...) asparagine glycan.

This sequence belongs to the sulfotransferase 2 family.

The protein resides in the golgi apparatus membrane. It catalyses the reaction dermatan + n 3'-phosphoadenylyl sulfate = dermatan 4'-sulfate + n adenosine 3',5'-bisphosphate + n H(+). Catalyzes the transfer of sulfate to position 4 of the N-acetylgalactosamine (GalNAc) residue of dermatan sulfate. Plays a pivotal role in the formation of 4-0-sulfated IdoA blocks in dermatan sulfate. Transfers sulfate to the C-4 hydroxyl of beta1,4-linked GalNAc that is substituted with an alpha-linked iduronic acid (IdoUA) at the C-3 hydroxyl. Transfers sulfate more efficiently to GalNAc residues in -IdoUA-GalNAc-IdoUA- than in -GlcUA-GalNAc-GlcUA-sequences. Has preference for partially desulfated dermatan sulfate. Addition of sulfate to GalNAc may occur immediately after epimerization of GlcUA to IdoUA. Appears to have an important role in the formation of the cerebellar neural network during postnatal brain development. The chain is Carbohydrate sulfotransferase 14 (Chst14) from Mus musculus (Mouse).